Here is an 809-residue protein sequence, read N- to C-terminus: ATP-dependent zinc metalloprotease FTSH 3, mitochondrial (809 aa).

Residues 1 to 83 (MTMIFFSKLN…FANPRLRRFF (83 aa)) constitute a mitochondrion transit peptide. Residues 93–121 (YENYFPKDKQEPKSDQKSEHKEGSEKNEN) are compositionally biased toward basic and acidic residues. Residues 93-122 (YENYFPKDKQEPKSDQKSEHKEGSEKNENE) are disordered. A helical transmembrane segment spans residues 132 to 152 (FQNLLIPLLALAVFFSTFSFG). Residue 362–369 (GPPGTGKT) coordinates ATP. Histidine 586 contributes to the Zn(2+) binding site. Glutamate 587 is an active-site residue. Positions 590 and 662 each coordinate Zn(2+). Residues 776 to 809 (GFEETEKDSAATPTVEPVVDDGAPPPFEPQVVPT) form a disordered region.

In the N-terminal section; belongs to the AAA ATPase family. It in the C-terminal section; belongs to the peptidase M41 family. The cofactor is Zn(2+).

It localises to the mitochondrion inner membrane. In terms of biological role, probable ATP-dependent zinc metallopeptidase. Involved in the assembly and/or stability of the complexes I and V of the mitochondrial oxidative phosphorylation system. The polypeptide is ATP-dependent zinc metalloprotease FTSH 3, mitochondrial (FTSH3) (Arabidopsis thaliana (Mouse-ear cress)).